A 68-amino-acid chain; its full sequence is Protein transport protein Sec61 subunit gamma (68 aa).

The Cytoplasmic segment spans residues 1 to 32 (MDQVMQFVEPSRQFVKDSIRLVKRCTKPDRKE). A helical membrane pass occupies residues 33–61 (FQKIAMATAIGFAIMGFIGFFVKLIHIPI). Topologically, residues 62–68 (NNIIVGS) are extracellular.

The protein belongs to the SecE/SEC61-gamma family. In terms of assembly, the SEC61 channel-forming translocon complex consists of channel-forming core components SEC61A1, SEC61B and SEC61G and different auxiliary components such as SEC62 and SEC63. The SEC61 channel associates with the multi-pass translocon (MPT) complex.

The protein resides in the endoplasmic reticulum membrane. Its function is as follows. Component of SEC61 channel-forming translocon complex that mediates transport of signal peptide-containing precursor polypeptides across the endoplasmic reticulum (ER). Forms a ribosome receptor and a gated pore in the ER membrane, both functions required for cotranslational translocation of nascent polypeptides. The SEC61 channel is also involved in ER membrane insertion of transmembrane proteins: it mediates membrane insertion of the first few transmembrane segments of proteins, while insertion of subsequent transmembrane regions of multi-pass membrane proteins is mediated by the multi-pass translocon (MPT) complex. The sequence is that of Protein transport protein Sec61 subunit gamma (sec61g) from Xenopus laevis (African clawed frog).